The following is a 173-amino-acid chain: Ribosome maturation factor RimM (173 aa).

Positions 95-169 (DPDEFYDHQL…VIEIDPPEGL (75 aa)) constitute a PRC barrel domain.

The protein belongs to the RimM family. As to quaternary structure, binds ribosomal protein uS19.

The protein resides in the cytoplasm. Functionally, an accessory protein needed during the final step in the assembly of 30S ribosomal subunit, possibly for assembly of the head region. Essential for efficient processing of 16S rRNA. May be needed both before and after RbfA during the maturation of 16S rRNA. It has affinity for free ribosomal 30S subunits but not for 70S ribosomes. The polypeptide is Ribosome maturation factor RimM (Mycobacteroides abscessus (strain ATCC 19977 / DSM 44196 / CCUG 20993 / CIP 104536 / JCM 13569 / NCTC 13031 / TMC 1543 / L948) (Mycobacterium abscessus)).